The chain runs to 195 residues: Peptidyl-tRNA hydrolase (195 aa).

Position 17 (Y17) interacts with tRNA. Catalysis depends on H22, which acts as the Proton acceptor. TRNA is bound by residues F68, N70, and N116.

The protein belongs to the PTH family. Monomer.

The protein resides in the cytoplasm. The catalysed reaction is an N-acyl-L-alpha-aminoacyl-tRNA + H2O = an N-acyl-L-amino acid + a tRNA + H(+). Its function is as follows. Hydrolyzes ribosome-free peptidyl-tRNAs (with 1 or more amino acids incorporated), which drop off the ribosome during protein synthesis, or as a result of ribosome stalling. In terms of biological role, catalyzes the release of premature peptidyl moieties from peptidyl-tRNA molecules trapped in stalled 50S ribosomal subunits, and thus maintains levels of free tRNAs and 50S ribosomes. The protein is Peptidyl-tRNA hydrolase of Pectobacterium carotovorum subsp. carotovorum (strain PC1).